The primary structure comprises 360 residues: CCA-adding enzyme (360 aa).

2 residues coordinate ATP: glycine 8 and arginine 11. CTP-binding residues include glycine 8 and arginine 11. Residues aspartate 21 and aspartate 23 each contribute to the Mg(2+) site. ATP-binding residues include arginine 91, arginine 137, and arginine 140. CTP-binding residues include arginine 91, arginine 137, and arginine 140.

It belongs to the tRNA nucleotidyltransferase/poly(A) polymerase family. Bacterial CCA-adding enzyme type 2 subfamily. Mg(2+) is required as a cofactor.

It carries out the reaction a tRNA precursor + 2 CTP + ATP = a tRNA with a 3' CCA end + 3 diphosphate. It catalyses the reaction a tRNA with a 3' CCA end + 2 CTP + ATP = a tRNA with a 3' CCACCA end + 3 diphosphate. Catalyzes the addition and repair of the essential 3'-terminal CCA sequence in tRNAs without using a nucleic acid template. Adds these three nucleotides in the order of C, C, and A to the tRNA nucleotide-73, using CTP and ATP as substrates and producing inorganic pyrophosphate. tRNA 3'-terminal CCA addition is required both for tRNA processing and repair. Also involved in tRNA surveillance by mediating tandem CCA addition to generate a CCACCA at the 3' terminus of unstable tRNAs. While stable tRNAs receive only 3'-terminal CCA, unstable tRNAs are marked with CCACCA and rapidly degraded. The sequence is that of CCA-adding enzyme from Francisella tularensis subsp. tularensis (strain FSC 198).